The primary structure comprises 285 residues: RNA polymerase sigma factor RpoH (285 aa).

The segment at 53 to 122 is sigma-70 factor domain-2; the sequence is LILSHLRFVI…IHEYVLRNWR (70 aa). The Interaction with polymerase core subunit RpoC signature appears at 77–80; the sequence is DLIQ. Residues 229–281 form a sigma-70 factor domain-4 region; that stretch reads ALLRLDERSRNIIRARWLDKKEKNTLQKIANNYGISAERVRQLEKNAMKKLKI. A DNA-binding region (H-T-H motif) is located at residues 254 to 273; that stretch reads LQKIANNYGISAERVRQLEK.

The protein belongs to the sigma-70 factor family. RpoH subfamily. In terms of assembly, interacts with the RNA polymerase core enzyme.

It localises to the cytoplasm. Sigma factors are initiation factors that promote the attachment of RNA polymerase to specific initiation sites and are then released. This sigma factor is involved in regulation of expression of heat shock genes. This chain is RNA polymerase sigma factor RpoH, found in Buchnera aphidicola subsp. Schizaphis graminum (strain Sg).